The following is a 117-amino-acid chain: B-box domain protein 30 (117 aa).

Residues 27–73 (KAPVSCELCGENATVYCEADAAFLCRKCDRWVHSANFLARRHLRRVI) form a B box-type; atypical zinc finger. Cys32, Cys35, Cys54, and His59 together coordinate Zn(2+). The PFVFL motif lies at 113-117 (PFVFL).

As to quaternary structure, interacts with CO (via B-box) and with TPL (via PFVFL motif). Highly expressed in shoot apical meristems and in vascular tissues of leaves. Also detected in petioles.

The protein localises to the nucleus. Functionally, developmental regulator acting by forming heterodimeric complexes, that sequester CO and CO-like (COL) proteins into non-functional complexes. Engages CO and the transcriptional repressor TPL in a tripartite complex. Involved in the CO-mediated long-day flowering-promotion pathway. The sequence is that of B-box domain protein 30 from Arabidopsis thaliana (Mouse-ear cress).